A 140-amino-acid polypeptide reads, in one-letter code: Nucleoside diphosphate kinase (140 aa).

Residues Lys-11, Phe-59, Arg-87, Thr-93, Arg-104, and Asn-114 each contribute to the ATP site. Catalysis depends on His-117, which acts as the Pros-phosphohistidine intermediate.

Belongs to the NDK family. As to quaternary structure, homotetramer. Requires Mg(2+) as cofactor.

The protein localises to the cytoplasm. It catalyses the reaction a 2'-deoxyribonucleoside 5'-diphosphate + ATP = a 2'-deoxyribonucleoside 5'-triphosphate + ADP. The enzyme catalyses a ribonucleoside 5'-diphosphate + ATP = a ribonucleoside 5'-triphosphate + ADP. Major role in the synthesis of nucleoside triphosphates other than ATP. The ATP gamma phosphate is transferred to the NDP beta phosphate via a ping-pong mechanism, using a phosphorylated active-site intermediate. The polypeptide is Nucleoside diphosphate kinase (Sphingopyxis alaskensis (strain DSM 13593 / LMG 18877 / RB2256) (Sphingomonas alaskensis)).